The following is a 206-amino-acid chain: Small ribosomal subunit protein uS3 (206 aa).

The KH type-2 domain occupies 39–107 (IRSYINESFK…SVEVNVVGIK (69 aa)).

This sequence belongs to the universal ribosomal protein uS3 family. In terms of assembly, part of the 30S ribosomal subunit. Forms a tight complex with proteins S10 and S14.

Its function is as follows. Binds the lower part of the 30S subunit head. Binds mRNA in the 70S ribosome, positioning it for translation. The chain is Small ribosomal subunit protein uS3 from Wolbachia sp. subsp. Brugia malayi (strain TRS).